A 1164-amino-acid chain; its full sequence is MSKVNSEESSSSQKLLKEVEKISEALYVNKNPRGSVAGSNKTPTKPLSRSNLAEPKEKKSFWNWPLRAINHVRNRRFNCCFSAQVHSIEGLPPIFQDLSLTVHWKRRDESLSTRPAKVSNGRAEFKDKLTHTCSVYGSRSGPHHSAKYEAKHFLLYVSLVGSPEIDLGKHRMDLTKLLPLTLEELQDEKSSGKWSTTFQLSGKANGATLSMSFGYTVVGDTRNPASSGSTQNFRSSSNVKQTSNNTGLTRAISAKSSLGNGKSASRRYDHSIVNRESHPLSQNMEEIKDLHEILPAVQSDLGSSVNTLYQKFDEEKVDPANESQFEFDVVTKHIEPVESISHEKEDANALQSELVTGNETVVPFEEIKKAGEVPTAGSDEVGAENFPLEEPLVNGNETDVPFELLKKAGEVPTAGRDEVGTEILPPEEPLVNGNETDVPFEELMITGEASIARSEEAVEIVTEELAPEEGNKISPKNEESVVPKDAEEVMNGEKDLKEMIMKDLESALKSVEMLEATASEDEEDRKKHGDKDKYFITPMKETVPSCSRDVAESVACEFLDMLGIEHSPFGLSSESEPESPRERLLREFEMETLAAGSLFDFSIEGDDPQLECDENFPNEYESDFEEGFDLASLVHDIEEEYQLEAQARVSHPRAKMLEGLETESLMREWGMNENTFQNSPPHNGRDAFHPADFPVKEPFDLPPLGDGLGPVVQTKNGGFLRSMNPLLFRNSKAGGSLIMQVSTPVVVPAEMGSGIMEILQKLATAGIEKLSMQANKVMPLDDITGKTMEEVLWETSPTIDIGDRDHVSERESGDASGFVRGGERRTSFAAKPKKFGSSSGNNNFDSEYVSLEDLAPLAMDQIEALSLEGLRIQSGMSDEDAPSDITAQSIGDISAFQGKSGCVGLEGAAGLQLLDIKDDGDDDDDGLMGLSLTLDEWMKLDSGDIGDEDEINERTSKILAAHHANPLNFIRKGSKGEKRKGKKGRKCGLLGNTFTVALMVQLRDPLRNYEPVGAPMLSLIQVERLFVPPKPKIYSTVSELKKTDEEEEADASDAKKEEKPMEEQGIPQYKITEVHLTGMKSETDKKPWGITTQQQQVQSGSRWLMANGMGKGNNKLPLMKPKLGSAKPGDKLWSVSGSGSKWKELGKMGKSNTHIRNPNVIMPK.

The tract at residues 30–54 is disordered; it reads KNPRGSVAGSNKTPTKPLSRSNLAE. Positions 37–51 are enriched in polar residues; the sequence is AGSNKTPTKPLSRSN. The C2 NT-type domain occupies 69–217; the sequence is INHVRNRRFN…TLSMSFGYTV (149 aa). Polar residues predominate over residues 224-263; that stretch reads PASSGSTQNFRSSSNVKQTSNNTGLTRAISAKSSLGNGKS. 4 disordered regions span residues 224–268, 466–486, 1038–1063, and 1124–1164; these read PASS…SRRY, APEE…PKDA, SELK…PMEE, and GSAK…IMPK. Composition is skewed to basic and acidic residues over residues 469–486 and 1052–1062; these read EGNK…PKDA and SDAKKEEKPME.

The protein resides in the cytoplasm. In terms of biological role, together with PMI1, necessary for chloroplast and nuclear photorelocation movements via the regulation of chloroplast-actin (cp-actin) filaments in pavement cells. This chain is Protein PLASTID MOVEMENT IMPAIRED 1-RELATED 1, found in Arabidopsis thaliana (Mouse-ear cress).